A 482-amino-acid chain; its full sequence is Cobyrinate a,c-diamide synthase (482 aa).

Residues Arg-248–Ser-441 enclose the GATase cobBQ-type domain. Cys-331 (nucleophile) is an active-site residue.

The protein belongs to the CobB/CbiA family. It depends on Mg(2+) as a cofactor.

It catalyses the reaction cob(II)yrinate + 2 L-glutamine + 2 ATP + 2 H2O = cob(II)yrinate a,c diamide + 2 L-glutamate + 2 ADP + 2 phosphate + 2 H(+). It functions in the pathway cofactor biosynthesis; adenosylcobalamin biosynthesis; cob(II)yrinate a,c-diamide from sirohydrochlorin (anaerobic route): step 10/10. Catalyzes the ATP-dependent amidation of the two carboxylate groups at positions a and c of cobyrinate, using either L-glutamine or ammonia as the nitrogen source. This is Cobyrinate a,c-diamide synthase from Synechocystis sp. (strain ATCC 27184 / PCC 6803 / Kazusa).